The chain runs to 239 residues: Adapter protein MecA (239 aa).

Residues 118–128 (EQRTKEKEAQG) show a composition bias toward basic and acidic residues. The segment at 118–137 (EQRTKEKEAQGSKRQKSSAR) is disordered.

Belongs to the MecA family. Homodimer.

In terms of biological role, enables the recognition and targeting of unfolded and aggregated proteins to the ClpC protease or to other proteins involved in proteolysis. This is Adapter protein MecA from Staphylococcus aureus (strain JH1).